The chain runs to 490 residues: Acetyl-coenzyme A carboxylase carboxyl transferase subunit beta, chloroplastic (490 aa).

The CoA carboxyltransferase N-terminal domain maps to 221–490 (LWVQCENCYG…PLNQKSSKIK (270 aa)). Zn(2+)-binding residues include Cys-225, Cys-228, Cys-244, and Cys-247. The C4-type zinc-finger motif lies at 225–247 (CENCYGLNYKKFLKSKMNICEQC).

It belongs to the AccD/PCCB family. As to quaternary structure, acetyl-CoA carboxylase is a heterohexamer composed of biotin carboxyl carrier protein, biotin carboxylase and 2 subunits each of ACCase subunit alpha and ACCase plastid-coded subunit beta (accD). Requires Zn(2+) as cofactor. In terms of tissue distribution, expressed in leaves, ripening and mature fruit.

Its subcellular location is the plastid. It localises to the chloroplast stroma. The protein resides in the chromoplast stroma. The catalysed reaction is N(6)-carboxybiotinyl-L-lysyl-[protein] + acetyl-CoA = N(6)-biotinyl-L-lysyl-[protein] + malonyl-CoA. Its pathway is lipid metabolism; malonyl-CoA biosynthesis; malonyl-CoA from acetyl-CoA: step 1/1. Its function is as follows. Component of the acetyl coenzyme A carboxylase (ACC) complex. Biotin carboxylase (BC) catalyzes the carboxylation of biotin on its carrier protein (BCCP) and then the CO(2) group is transferred by the transcarboxylase to acetyl-CoA to form malonyl-CoA. Is up-regulated upon chromoplast differentiation, presumably for fatty acid biosynthesis. This Solanum lycopersicum (Tomato) protein is Acetyl-coenzyme A carboxylase carboxyl transferase subunit beta, chloroplastic.